We begin with the raw amino-acid sequence, 198 residues long: Probable GTP-binding protein EngB (198 aa).

The region spanning 22–195 (DLPEIALAGR…WKAIHKFTKT (174 aa)) is the EngB-type G domain. GTP-binding positions include 30 to 37 (GRSNVGKS), 57 to 61 (GKTQT), 75 to 78 (DVPG), 142 to 145 (TKAD), and 174 to 176 (FSS). 2 residues coordinate Mg(2+): Ser37 and Thr59.

It belongs to the TRAFAC class TrmE-Era-EngA-EngB-Septin-like GTPase superfamily. EngB GTPase family. Mg(2+) is required as a cofactor.

Necessary for normal cell division and for the maintenance of normal septation. The polypeptide is Probable GTP-binding protein EngB (Bacillus cereus (strain B4264)).